The sequence spans 150 residues: 3-hydroxyacyl-[acyl-carrier-protein] dehydratase FabZ (150 aa).

His-52 is a catalytic residue.

It belongs to the thioester dehydratase family. FabZ subfamily.

Its subcellular location is the cytoplasm. The enzyme catalyses a (3R)-hydroxyacyl-[ACP] = a (2E)-enoyl-[ACP] + H2O. Involved in unsaturated fatty acids biosynthesis. Catalyzes the dehydration of short chain beta-hydroxyacyl-ACPs and long chain saturated and unsaturated beta-hydroxyacyl-ACPs. The chain is 3-hydroxyacyl-[acyl-carrier-protein] dehydratase FabZ from Variovorax paradoxus (strain S110).